A 135-amino-acid polypeptide reads, in one-letter code: Protein PsiE homolog (135 aa).

Transmembrane regions (helical) follow at residues 20-40 (VGLI…TIHL), 54-74 (YMLI…ALIV), 82-102 (HFPL…LIIV), and 107-127 (PIDT…LYLA).

It belongs to the PsiE family.

It is found in the cell inner membrane. This Yersinia pseudotuberculosis serotype IB (strain PB1/+) protein is Protein PsiE homolog.